The following is a 130-amino-acid chain: Large ribosomal subunit protein bL17 (130 aa).

This sequence belongs to the bacterial ribosomal protein bL17 family. As to quaternary structure, part of the 50S ribosomal subunit. Contacts protein L32.

The protein is Large ribosomal subunit protein bL17 of Delftia acidovorans (strain DSM 14801 / SPH-1).